A 226-amino-acid polypeptide reads, in one-letter code: 7-cyano-7-deazaguanine synthase (226 aa).

10 to 20 lines the ATP pocket; the sequence is LSGGLDSATAA. Zn(2+) contacts are provided by C191, C199, C202, and C205.

Belongs to the QueC family. The cofactor is Zn(2+).

It carries out the reaction 7-carboxy-7-deazaguanine + NH4(+) + ATP = 7-cyano-7-deazaguanine + ADP + phosphate + H2O + H(+). It participates in purine metabolism; 7-cyano-7-deazaguanine biosynthesis. Its function is as follows. Catalyzes the ATP-dependent conversion of 7-carboxy-7-deazaguanine (CDG) to 7-cyano-7-deazaguanine (preQ(0)). This is 7-cyano-7-deazaguanine synthase from Synechococcus sp. (strain CC9605).